Here is a 326-residue protein sequence, read N- to C-terminus: ATP synthase subunit b 2 (326 aa).

Residues 2 to 22 (LIDWFTVVAQALNFLILVWLL) form a helical membrane-spanning segment. 2 stretches are compositionally biased toward basic and acidic residues: residues 275–298 (QQGRKEGRAVQNWDKAESEIRKEN) and 306–326 (PPPEAKAKPKPEEPKPEIGSP). The disordered stretch occupies residues 275 to 326 (QQGRKEGRAVQNWDKAESEIRKENLSPAKTEPPPEAKAKPKPEEPKPEIGSP).

This sequence belongs to the ATPase B chain family. F-type ATPases have 2 components, F(1) - the catalytic core - and F(0) - the membrane proton channel. F(1) has five subunits: alpha(3), beta(3), gamma(1), delta(1), epsilon(1). F(0) has three main subunits: a(1), b(2) and c(10-14). The alpha and beta chains form an alternating ring which encloses part of the gamma chain. F(1) is attached to F(0) by a central stalk formed by the gamma and epsilon chains, while a peripheral stalk is formed by the delta and b chains.

The protein localises to the cell inner membrane. Functionally, f(1)F(0) ATP synthase produces ATP from ADP in the presence of a proton or sodium gradient. F-type ATPases consist of two structural domains, F(1) containing the extramembraneous catalytic core and F(0) containing the membrane proton channel, linked together by a central stalk and a peripheral stalk. During catalysis, ATP synthesis in the catalytic domain of F(1) is coupled via a rotary mechanism of the central stalk subunits to proton translocation. In terms of biological role, component of the F(0) channel, it forms part of the peripheral stalk, linking F(1) to F(0). The sequence is that of ATP synthase subunit b 2 from Albidiferax ferrireducens (strain ATCC BAA-621 / DSM 15236 / T118) (Rhodoferax ferrireducens).